A 337-amino-acid chain; its full sequence is Phenylalanine--tRNA ligase alpha subunit (337 aa).

E252 is a Mg(2+) binding site.

The protein belongs to the class-II aminoacyl-tRNA synthetase family. Phe-tRNA synthetase alpha subunit type 1 subfamily. Tetramer of two alpha and two beta subunits. It depends on Mg(2+) as a cofactor.

It is found in the cytoplasm. It catalyses the reaction tRNA(Phe) + L-phenylalanine + ATP = L-phenylalanyl-tRNA(Phe) + AMP + diphosphate + H(+). This is Phenylalanine--tRNA ligase alpha subunit from Francisella tularensis subsp. tularensis (strain SCHU S4 / Schu 4).